Here is a 108-residue protein sequence, read N- to C-terminus: uncharacterized protein (108 aa).

2 helical membrane passes run 51–71 (VFAALFMAPTIQLSFCLFCFL) and 86–106 (PLSTGTVLLFGICCQVAKSLL).

Its subcellular location is the membrane. This is an uncharacterized protein from Saccharomyces cerevisiae (strain ATCC 204508 / S288c) (Baker's yeast).